A 127-amino-acid polypeptide reads, in one-letter code: Fatty acid-binding protein, liver-type (127 aa).

Belongs to the calycin superfamily. Fatty-acid binding protein (FABP) family.

It localises to the cytoplasm. This Epinephelus coioides (Orange-spotted grouper) protein is Fatty acid-binding protein, liver-type (fabp1).